The following is a 497-amino-acid chain: Serine hydroxymethyltransferase (497 aa).

(6S)-5,6,7,8-tetrahydrofolate is bound by residues Leu176 and 180-182 (GHL). Lys289 is subject to N6-(pyridoxal phosphate)lysine.

Belongs to the SHMT family. In terms of assembly, homodimer. Pyridoxal 5'-phosphate serves as cofactor.

Its subcellular location is the cytoplasm. It carries out the reaction (6R)-5,10-methylene-5,6,7,8-tetrahydrofolate + glycine + H2O = (6S)-5,6,7,8-tetrahydrofolate + L-serine. Its pathway is one-carbon metabolism; tetrahydrofolate interconversion. It functions in the pathway amino-acid biosynthesis; glycine biosynthesis; glycine from L-serine: step 1/1. Its function is as follows. Catalyzes the reversible interconversion of serine and glycine with tetrahydrofolate (THF) serving as the one-carbon carrier. This reaction serves as the major source of one-carbon groups required for the biosynthesis of purines, thymidylate, methionine, and other important biomolecules. Also exhibits THF-independent aldolase activity toward beta-hydroxyamino acids, producing glycine and aldehydes, via a retro-aldol mechanism. This chain is Serine hydroxymethyltransferase, found in Chlamydia trachomatis serovar L2b (strain UCH-1/proctitis).